The chain runs to 174 residues: Major allergen Can f 1 (174 aa).

A signal peptide spans 1–18 (MKTLLLTIGFSLIAILQA). Cys-78 and Cys-169 form a disulfide bridge. Asn-80 carries an N-linked (GlcNAc...) asparagine glycan.

Belongs to the calycin superfamily. Lipocalin family. Tongue epithelial tissue.

Its subcellular location is the secreted. This Canis lupus familiaris (Dog) protein is Major allergen Can f 1.